A 159-amino-acid polypeptide reads, in one-letter code: Ribosome maturation factor RimP (159 aa).

This sequence belongs to the RimP family.

Its subcellular location is the cytoplasm. Functionally, required for maturation of 30S ribosomal subunits. The polypeptide is Ribosome maturation factor RimP (Geotalea daltonii (strain DSM 22248 / JCM 15807 / FRC-32) (Geobacter daltonii)).